The sequence spans 269 residues: Small ribosomal subunit protein uS3 (269 aa).

The region spanning 38-106 (IREWLHKNLE…QIQLNILEVK (69 aa)) is the KH type-2 domain. Residues 215-269 (AQKAARQAAQGGRGGRGGNRRGRGDRPDRRGGRRRAEAAKQSAETPAPQTENAGA) are disordered. Residues 236–252 (GRGDRPDRRGGRRRAEA) are compositionally biased toward basic and acidic residues. Residues 256-269 (SAETPAPQTENAGA) are compositionally biased toward polar residues.

The protein belongs to the universal ribosomal protein uS3 family. Part of the 30S ribosomal subunit. Forms a tight complex with proteins S10 and S14.

In terms of biological role, binds the lower part of the 30S subunit head. Binds mRNA in the 70S ribosome, positioning it for translation. The protein is Small ribosomal subunit protein uS3 of Cutibacterium acnes (strain DSM 16379 / KPA171202) (Propionibacterium acnes).